Here is a 136-residue protein sequence, read N- to C-terminus: Nucleoside diphosphate kinase (136 aa).

ATP-binding residues include lysine 10, phenylalanine 58, arginine 86, threonine 92, arginine 104, and asparagine 114. Histidine 117 functions as the Pros-phosphohistidine intermediate in the catalytic mechanism.

This sequence belongs to the NDK family. In terms of assembly, homotetramer. Mg(2+) serves as cofactor.

The protein resides in the cytoplasm. The catalysed reaction is a 2'-deoxyribonucleoside 5'-diphosphate + ATP = a 2'-deoxyribonucleoside 5'-triphosphate + ADP. It catalyses the reaction a ribonucleoside 5'-diphosphate + ATP = a ribonucleoside 5'-triphosphate + ADP. Major role in the synthesis of nucleoside triphosphates other than ATP. The ATP gamma phosphate is transferred to the NDP beta phosphate via a ping-pong mechanism, using a phosphorylated active-site intermediate. This is Nucleoside diphosphate kinase from Mycolicibacterium gilvum (strain PYR-GCK) (Mycobacterium gilvum (strain PYR-GCK)).